We begin with the raw amino-acid sequence, 551 residues long: HTH-type transcriptional regulator SgrR (551 aa).

The HTH marR-type domain occupies 1 to 116; the sequence is MPSARLQQQF…LVSHLGRSFR (116 aa). A DNA-binding region (H-T-H motif) is located at residues 26-49; sequence LNELAALLSCSRRHMRTLLNTMQD. Positions 163–492 are solute-binding; the sequence is ELEADIAHHW…IDWQADAARW (330 aa).

Its function is as follows. Activates the small RNA gene sgrS under glucose-phosphate stress conditions as well as yfdZ. Represses its own transcription under both stress and non-stress conditions. Might act as a sensor of the intracellular accumulation of phosphoglucose by binding these molecules in its C-terminal solute-binding domain. The protein is HTH-type transcriptional regulator SgrR of Shigella sonnei (strain Ss046).